The primary structure comprises 290 residues: Bifunctional protein FolD 1 (290 aa).

Residues 172 to 174 and I238 each bind NADP(+); that span reads GAS.

The protein belongs to the tetrahydrofolate dehydrogenase/cyclohydrolase family. Homodimer.

The enzyme catalyses (6R)-5,10-methylene-5,6,7,8-tetrahydrofolate + NADP(+) = (6R)-5,10-methenyltetrahydrofolate + NADPH. It carries out the reaction (6R)-5,10-methenyltetrahydrofolate + H2O = (6R)-10-formyltetrahydrofolate + H(+). It participates in one-carbon metabolism; tetrahydrofolate interconversion. Its function is as follows. Catalyzes the oxidation of 5,10-methylenetetrahydrofolate to 5,10-methenyltetrahydrofolate and then the hydrolysis of 5,10-methenyltetrahydrofolate to 10-formyltetrahydrofolate. The chain is Bifunctional protein FolD 1 from Pseudomonas putida (strain GB-1).